A 508-amino-acid polypeptide reads, in one-letter code: Erythropoietin receptor (508 aa).

An N-terminal signal peptide occupies residues 1–24 (MNHLWTHLWPGVGSLCLLLAGAAW). Residues 25-250 (ASLPKPLDPK…SLLTASDLDP (226 aa)) are Extracellular-facing. A disulfide bridge links cysteine 52 with cysteine 62. Asparagine 76 carries N-linked (GlcNAc...) asparagine glycosylation. A disulfide bridge connects residues cysteine 91 and cysteine 107. In terms of domain architecture, Fibronectin type-III spans 148 to 247 (PPAGLLARRA…EPASLLTASD (100 aa)). A glycan (N-linked (GlcNAc...) asparagine) is linked at asparagine 184. The short motif at 233 to 237 (WSAWS) is the WSXWS motif element. The chain crosses the membrane as a helical span at residues 251-273 (LILTLSLILVLILLLLAVLALLS). Residues 274–508 (HRRTLKQKIW…PSPPGYVACS (235 aa)) lie on the Cytoplasmic side of the membrane. Lysine 281 participates in a covalent cross-link: Glycyl lysine isopeptide (Lys-Gly) (interchain with G-Cter in ubiquitin). A Box 1 motif motif is present at residues 282–290 (IWPGIPSPE). Residues tyrosine 368 and tyrosine 426 each carry the phosphotyrosine; by JAK2 modification. Positions 452–457 (IKYLYL) match the ITIM motif motif. Lysine 453 participates in a covalent cross-link: Glycyl lysine isopeptide (Lys-Gly) (interchain with G-Cter in ubiquitin). Tyrosine 454, tyrosine 456, tyrosine 468, tyrosine 489, and tyrosine 504 each carry phosphotyrosine; by JAK2. The segment at 467-508 (DYSSGGSQGAQGDSLNSPFLNPYENSLIPAPEPSPPGYVACS) is disordered.

Belongs to the type I cytokine receptor family. Type 1 subfamily. Forms homodimers on EPO stimulation. The tyrosine-phosphorylated form interacts with several SH2 domain-containing proteins including LYN, the adapter protein SH2B2, PTPN6, PTPN11, JAK2, PI3 kinases, STAT5A/B, SOCS3, CRKL. Interacts with INPP5D/SHIP1. SH2B2 binding inhibits the JAK-STAT signaling. Interacts with RHEX; this interaction occurs in a erythropoietin (EPO)-dependent manner. Interacts with ATXN2L. In terms of processing, on EPO stimulation, phosphorylated on C-terminal tyrosine residues by JAK2. The phosphotyrosine motifs are also recruitment sites for several SH2-containing proteins and adapter proteins which mediate cell proliferation. Phosphorylation on Tyr-454 is required for PTPN6 interaction, Tyr-426 for PTPN11. Tyr-426 is also required for SOCS3 binding, but Tyr-454/Tyr-456 motif is the preferred binding site. Ubiquitinated by the ECS(SOCS2) complex following ligand-binding and phosphorylation by JAK2, leading to its degradation by the proteasome. Regulation by the ECS(SOCS2) complex acts as a negative feedback loop of erythropoietin-mediated signaling pathway. Ubiquitination at Lys-281 mediates receptor internalization, whereas ubiquitination at Lys-453 promotes trafficking of activated receptors to the lysosomes for degradation. Ubiquitinated by NOSIP; appears to be either multi-monoubiquitinated or polyubiquitinated. Ubiquitination mediates proliferation and survival of EPO-dependent cells.

It is found in the cell membrane. Receptor for erythropoietin, which mediates erythropoietin-induced erythroblast proliferation and differentiation. Upon EPO stimulation, EPOR dimerizes triggering the JAK2/STAT5 signaling cascade. In some cell types, can also activate STAT1 and STAT3. May also activate the LYN tyrosine kinase. In terms of biological role, isoform EPOR-T acts as a dominant-negative receptor of EPOR-mediated signaling. The sequence is that of Erythropoietin receptor (EPOR) from Canis lupus familiaris (Dog).